A 214-amino-acid polypeptide reads, in one-letter code: Pyrrolidone-carboxylate peptidase (214 aa).

Catalysis depends on residues Glu-80, Cys-143, and His-166.

This sequence belongs to the peptidase C15 family. In terms of assembly, homotetramer.

It is found in the cytoplasm. The catalysed reaction is Release of an N-terminal pyroglutamyl group from a polypeptide, the second amino acid generally not being Pro.. In terms of biological role, removes 5-oxoproline from various penultimate amino acid residues except L-proline. This Enterobacter sp. (strain 638) protein is Pyrrolidone-carboxylate peptidase.